A 569-amino-acid chain; its full sequence is WD repeat-containing protein 20 (569 aa).

Alanine 2 carries the post-translational modification N-acetylalanine. WD repeat units follow at residues arginine 94 to serine 138, lysine 139 to arginine 210, asparagine 211 to valine 252, glutamate 253 to aspartate 331, glutamate 332 to proline 426, proline 427 to leucine 523, and glutamate 524 to glycine 559. Phosphoserine occurs at positions 357 and 360. Polar residues-rich tracts occupy residues asparagine 405–asparagine 423 and arginine 431–serine 445. Residues asparagine 405–serine 445 form a disordered region. Serine 432, serine 434, and serine 465 each carry phosphoserine. The mediates XPO1-dependent nuclear export of WDR20-USP12 complexes stretch occupies residues methionine 450–aspartate 468.

In terms of assembly, interacts with USP12; promotes translocation of USP12/WDR20 to the plasma membrane. Component of the USP12/WDR20/WDR48 deubiquitinating complex. Interacts with USP46; contributes to the cytoplasmic localization of the USP46/WDR20 complex. Component of the USP12/DMWD/WDR48 deubiquitinating complex.

Its subcellular location is the cytoplasm. The protein localises to the nucleus. Functionally, regulator of deubiquitinating complexes. Activates deubiquitinating activity of complexes containing USP12. Anchors at the base of the ubiquitin-contacting loop of USP12 and remotely modulates the catalytic center of the enzyme. Regulates shuttling of the USP12 deubiquitinase complex between the plasma membrane, cytoplasm and nucleus. This chain is WD repeat-containing protein 20 (WDR20), found in Homo sapiens (Human).